A 105-amino-acid chain; its full sequence is Large ribosomal subunit protein eL30 (105 aa).

The protein belongs to the eukaryotic ribosomal protein eL30 family.

The sequence is that of Large ribosomal subunit protein eL30 (RPL30) from Candida glabrata (strain ATCC 2001 / BCRC 20586 / JCM 3761 / NBRC 0622 / NRRL Y-65 / CBS 138) (Yeast).